Consider the following 224-residue polypeptide: Putative adhesin RMA_1308 (224 aa).

The first 22 residues, 1–22 (MQKLLLIAATSATILSSSLSFA), serve as a signal peptide directing secretion.

This Rickettsia massiliae (strain Mtu5) protein is Putative adhesin RMA_1308.